We begin with the raw amino-acid sequence, 86 residues long: Small ribosomal subunit protein uS17 (86 aa).

The protein belongs to the universal ribosomal protein uS17 family. In terms of assembly, part of the 30S ribosomal subunit.

Functionally, one of the primary rRNA binding proteins, it binds specifically to the 5'-end of 16S ribosomal RNA. This is Small ribosomal subunit protein uS17 from Roseiflexus castenholzii (strain DSM 13941 / HLO8).